The primary structure comprises 273 residues: Ribosomal RNA small subunit methyltransferase A (273 aa).

S-adenosyl-L-methionine-binding residues include N17, L19, G44, E65, and N111.

The protein belongs to the class I-like SAM-binding methyltransferase superfamily. rRNA adenine N(6)-methyltransferase family. RsmA subfamily.

It localises to the cytoplasm. The enzyme catalyses adenosine(1518)/adenosine(1519) in 16S rRNA + 4 S-adenosyl-L-methionine = N(6)-dimethyladenosine(1518)/N(6)-dimethyladenosine(1519) in 16S rRNA + 4 S-adenosyl-L-homocysteine + 4 H(+). In terms of biological role, specifically dimethylates two adjacent adenosines (A1518 and A1519) in the loop of a conserved hairpin near the 3'-end of 16S rRNA in the 30S particle. May play a critical role in biogenesis of 30S subunits. The polypeptide is Ribosomal RNA small subunit methyltransferase A (Buchnera aphidicola subsp. Acyrthosiphon pisum (strain APS) (Acyrthosiphon pisum symbiotic bacterium)).